The primary structure comprises 239 residues: Ribonuclease HII (239 aa).

The RNase H type-2 domain occupies 18-231; it reads KIIVGLDEAG…SKNLLKEIEE (214 aa). Positions 24, 25, and 125 each coordinate a divalent metal cation.

This sequence belongs to the RNase HII family. It depends on Mn(2+) as a cofactor. Mg(2+) is required as a cofactor.

Its subcellular location is the cytoplasm. It carries out the reaction Endonucleolytic cleavage to 5'-phosphomonoester.. In terms of biological role, endonuclease that specifically degrades the RNA of RNA-DNA hybrids. The sequence is that of Ribonuclease HII from Methanococcus maripaludis (strain C7 / ATCC BAA-1331).